The primary structure comprises 158 residues: NADH-quinone oxidoreductase subunit B (158 aa).

Residues Cys37, Cys38, Cys102, and Cys132 each coordinate [4Fe-4S] cluster.

Belongs to the complex I 20 kDa subunit family. In terms of assembly, NDH-1 is composed of 14 different subunits. Subunits NuoB, C, D, E, F, and G constitute the peripheral sector of the complex. [4Fe-4S] cluster serves as cofactor.

The protein resides in the cell inner membrane. It catalyses the reaction a quinone + NADH + 5 H(+)(in) = a quinol + NAD(+) + 4 H(+)(out). Its function is as follows. NDH-1 shuttles electrons from NADH, via FMN and iron-sulfur (Fe-S) centers, to quinones in the respiratory chain. Couples the redox reaction to proton translocation (for every two electrons transferred, four hydrogen ions are translocated across the cytoplasmic membrane), and thus conserves the redox energy in a proton gradient. The chain is NADH-quinone oxidoreductase subunit B from Bordetella parapertussis (strain 12822 / ATCC BAA-587 / NCTC 13253).